The following is a 912-amino-acid chain: Cadherin-2 (912 aa).

A signal peptide spans 1-28; the sequence is MCRIAGTPPRILPPLALMLLAALQQAPI. The propeptide occupies 29–164; the sequence is KATCEDMLCK…DSSHLKRQKR (136 aa). 5 consecutive Cadherin domains span residues 165 to 272, 273 to 387, 388 to 502, 503 to 609, and 610 to 720; these read DWVI…RPEF, LHQV…PPEF, TAMT…SPYF, VPNP…DNAP, and QVNP…DVDR. Residues 165–729 lie on the Extracellular side of the membrane; it reads DWVIPPINLP…RIVGAGLGTG (565 aa). 8 residues coordinate Ca(2+): Glu175, Asp231, Glu233, Asp264, Met265, Asn266, Asp267, and Asn268. Asn278 carries an N-linked (GlcNAc...) asparagine glycan. 3 residues coordinate Ca(2+): Asp298, Asp300, and Asn306. Asn330 carries N-linked (GlcNAc...) asparagine glycosylation. Asp358 serves as a coordination point for Ca(2+). Asn407, Asn578, Asn628, and Asn657 each carry an N-linked (GlcNAc...) asparagine glycan. The chain crosses the membrane as a helical span at residues 730–752; the sequence is AIIAILLCIIILLILVLMFVVWM. Over 753–912 the chain is Cytoplasmic; it reads KRRDKERQAK…LADMYGGGDD (160 aa). The span at 869–886 shows a compositional bias: low complexity; it reads SGSTAGSLSSLNSSSSGG. The interval 869–890 is disordered; sequence SGSTAGSLSSLNSSSSGGEQDY.

As to quaternary structure, homodimer (via extracellular region). Can also form heterodimers with other cadherins (via extracellular region). Dimerization occurs in trans, i.e. with a cadherin chain from another cell. Interacts with CTNNA2. As to expression, expressed at intercalated disks in the heart (at protein level).

The protein localises to the cell membrane. It is found in the sarcolemma. It localises to the cell junction. Its subcellular location is the cell surface. The protein resides in the desmosome. The protein localises to the adherens junction. In terms of biological role, calcium-dependent cell adhesion protein; preferentially mediates homotypic cell-cell adhesion. Cadherins may thus contribute to the sorting of heterogeneous cell types, and thereby play an important role during embryonic development. Required for proper neurite branching, and pre- and postsynaptic organization. In Gallus gallus (Chicken), this protein is Cadherin-2 (CDH2).